The chain runs to 314 residues: Ribonuclease Z (314 aa).

Zn(2+) contacts are provided by H61, H63, D65, H66, H137, D207, and H263. D65 (proton acceptor) is an active-site residue.

The protein belongs to the RNase Z family. Homodimer. The cofactor is Zn(2+).

The catalysed reaction is Endonucleolytic cleavage of RNA, removing extra 3' nucleotides from tRNA precursor, generating 3' termini of tRNAs. A 3'-hydroxy group is left at the tRNA terminus and a 5'-phosphoryl group is left at the trailer molecule.. In terms of biological role, zinc phosphodiesterase, which displays some tRNA 3'-processing endonuclease activity. Probably involved in tRNA maturation, by removing a 3'-trailer from precursor tRNA. In Thermococcus kodakarensis (strain ATCC BAA-918 / JCM 12380 / KOD1) (Pyrococcus kodakaraensis (strain KOD1)), this protein is Ribonuclease Z.